The following is a 228-amino-acid chain: MGCKVLVVDLDGTLTLSRNTYELSVEALLALRRARDAGIRVVLATANGLDFALTVARYLGVRDVIAENGCLVHIDGETHELCSGDMSEVDRAVLATGAVAPSHQNKCRRFDLAYVPLVENAVERVKAAVRPGYVVDSSGYAIHVRPAGADKGAAVRWLCERLGVSCGWVAAVGDSDVDAGMLATAWGIAVGNATEAAKRAARAVVRGPSGLGFKEAVDLILSGGACAP.

Catalysis depends on aspartate 9, which acts as the Nucleophile. Mg(2+) is bound by residues aspartate 9 and aspartate 11. Position 151 (lysine 151) interacts with substrate. The Mg(2+) site is built by aspartate 174 and aspartate 178.

Belongs to the archaeal SPP-like hydrolase family. Requires Mg(2+) as cofactor.

It catalyses the reaction 2-phosphoglycolate + H2O = glycolate + phosphate. In terms of biological role, catalyzes the dephosphorylation of 2-phosphoglycolate. The sequence is that of Phosphoglycolate phosphatase from Pyrobaculum neutrophilum (strain DSM 2338 / JCM 9278 / NBRC 100436 / V24Sta) (Thermoproteus neutrophilus).